A 642-amino-acid polypeptide reads, in one-letter code: Threonine--tRNA ligase (642 aa).

The TGS domain occupies 1 to 61 (MPVITLPDGS…ETDSELSIIT (61 aa)). Positions 243–534 (DHRKIGKQLD…LIEEYAGKFP (292 aa)) are catalytic. Cys334, His385, and His511 together coordinate Zn(2+).

It belongs to the class-II aminoacyl-tRNA synthetase family. Homodimer. It depends on Zn(2+) as a cofactor.

Its subcellular location is the cytoplasm. The catalysed reaction is tRNA(Thr) + L-threonine + ATP = L-threonyl-tRNA(Thr) + AMP + diphosphate + H(+). In terms of biological role, catalyzes the attachment of threonine to tRNA(Thr) in a two-step reaction: L-threonine is first activated by ATP to form Thr-AMP and then transferred to the acceptor end of tRNA(Thr). Also edits incorrectly charged L-seryl-tRNA(Thr). The protein is Threonine--tRNA ligase of Shewanella halifaxensis (strain HAW-EB4).